Reading from the N-terminus, the 557-residue chain is (-)-germacrene D synthase (557 aa).

Residues aspartate 310, aspartate 314, and glutamate 462 each coordinate Mg(2+). The DDXXD motif motif lies at 310-314 (DDIYD).

It belongs to the terpene synthase family. Tpsa subfamily. Mg(2+) serves as cofactor. In terms of tissue distribution, expressed in flowers. Detected in stems, young leaves and tendrils.

It is found in the cytoplasm. It carries out the reaction (2E,6E)-farnesyl diphosphate + H2O = (1E,4S,5E,7R)-germacra-1(10),5-dien-11-ol + diphosphate. The enzyme catalyses (2E,6E)-farnesyl diphosphate = (-)-germacrene D + diphosphate. The protein operates within secondary metabolite biosynthesis; terpenoid biosynthesis. Functionally, involved in the biosynthesis of germacrene D. Can use farnesyl diphosphate as substrate, but not geranyl diphosphate or geranylgeranyl diphosphate. Produces mainly (-)-germacrene D along with gamma-cadinene. The chain is (-)-germacrene D synthase from Vitis vinifera (Grape).